A 347-amino-acid chain; its full sequence is 3-isopropylmalate dehydrogenase (347 aa).

Residues Arg-95, Arg-105, Arg-129, and Asp-220 each coordinate substrate. Positions 220, 244, and 248 each coordinate Mg(2+). 280-292 (GSAPDIAGQGKAD) is an NAD(+) binding site.

Belongs to the isocitrate and isopropylmalate dehydrogenases family. LeuB type 2 subfamily. In terms of assembly, homodimer. The cofactor is Mg(2+). It depends on Mn(2+) as a cofactor.

The protein localises to the cytoplasm. The catalysed reaction is (2R,3S)-3-isopropylmalate + NAD(+) = 4-methyl-2-oxopentanoate + CO2 + NADH. Its pathway is amino-acid biosynthesis; L-leucine biosynthesis; L-leucine from 3-methyl-2-oxobutanoate: step 3/4. Functionally, catalyzes the oxidation of 3-carboxy-2-hydroxy-4-methylpentanoate (3-isopropylmalate) to 3-carboxy-4-methyl-2-oxopentanoate. The product decarboxylates to 4-methyl-2 oxopentanoate. This is 3-isopropylmalate dehydrogenase from Beutenbergia cavernae (strain ATCC BAA-8 / DSM 12333 / CCUG 43141 / JCM 11478 / NBRC 16432 / NCIMB 13614 / HKI 0122).